The chain runs to 631 residues: Protein FRIABLE 1 (631 aa).

Positions 1–13 are enriched in low complexity; sequence MSVGVPVNPSSSS. The interval 1–36 is disordered; sequence MSVGVPVNPSSSSQLPAAPTTTTRRRVADSQEDHSH. Topologically, residues 1 to 120 are cytoplasmic; that stretch reads MSVGVPVNPS…NMRSTTNLGR (120 aa). A compositionally biased stretch (basic and acidic residues) spans 26–36; sequence RVADSQEDHSH. Residues 121–141 form a helical; Signal-anchor for type II membrane protein membrane-spanning segment; it reads FILTLLSILVVTFFLIVALSG. Residues 142–631 lie on the Lumenal side of the membrane; sequence GVGRRRKHVE…RPSLRAQSLR (490 aa). N-linked (GlcNAc...) asparagine glycosylation is found at Asn-246, Asn-329, and Asn-364. 384–386 provides a ligand contact to substrate; it reads HLR. Residues Asn-398 and Asn-425 are each glycosylated (N-linked (GlcNAc...) asparagine).

Belongs to the glycosyltransferase GT106 family. Ubiquitous. Strong expression in young seedlings, particularly at the junction between hypocotyl and root, in emerging cotyledons, and in parts of the roots. Also detected in the inflorescence (sepals, petals, mature pollen and siliques) and rosette leaves.

Its subcellular location is the golgi apparatus membrane. The protein operates within glycan metabolism. Glycosyltransferase required for normal cell adhesion and cell wall integrity. This chain is Protein FRIABLE 1, found in Arabidopsis thaliana (Mouse-ear cress).